The chain runs to 242 residues: Ribosomal RNA large subunit methyltransferase E (242 aa).

S-adenosyl-L-methionine contacts are provided by Gly-64, Trp-66, Asp-84, Asp-100, and Asp-125. Catalysis depends on Lys-165, which acts as the Proton acceptor. The disordered stretch occupies residues 198–242 (SSETFLLGRGLKKASPNGLDSRSGTAAEPAPLVPIGTNSMPANGD). The span at 233 to 242 (GTNSMPANGD) shows a compositional bias: polar residues.

The protein belongs to the class I-like SAM-binding methyltransferase superfamily. RNA methyltransferase RlmE family.

The protein localises to the cytoplasm. The catalysed reaction is uridine(2552) in 23S rRNA + S-adenosyl-L-methionine = 2'-O-methyluridine(2552) in 23S rRNA + S-adenosyl-L-homocysteine + H(+). Functionally, specifically methylates the uridine in position 2552 of 23S rRNA at the 2'-O position of the ribose in the fully assembled 50S ribosomal subunit. In Verminephrobacter eiseniae (strain EF01-2), this protein is Ribosomal RNA large subunit methyltransferase E.